The primary structure comprises 386 residues: Manganese dependent endoglucanase Eg5A (386 aa).

Residues 1 to 17 (MLKYASIALALATLGVA) form the signal peptide. Residues 18 to 53 (QQQQWGQCGGIGWTGATTCVAGSVCSVLNPYYSQCI) enclose the CBM1 domain. Glu-209 acts as the Proton donor in catalysis. Glu-319 serves as the catalytic Nucleophile. Residue Asn-324 is glycosylated (N-linked (GlcNAc...) asparagine).

The protein belongs to the glycosyl hydrolase 5 (cellulase A) family. It depends on Mn(2+) as a cofactor.

Its subcellular location is the secreted. The catalysed reaction is Endohydrolysis of (1-&gt;4)-beta-D-glucosidic linkages in cellulose, lichenin and cereal beta-D-glucans.. Functionally, secreted manganese dependent endoglucanase that acts by cleaving the beta-1,4-glucose linkage. Exhibits high activity toward carboxymethyl-cellulose (CMC), barley glucan, and glucomannan. Displays low activity on larminarin and xyloglucan but does not hydrolyze hemicellulose substrates such as birchwood xylan, arabinoxylan, and arabinan. This Phanerodontia chrysosporium (White-rot fungus) protein is Manganese dependent endoglucanase Eg5A.